Here is a 319-residue protein sequence, read N- to C-terminus: 33 kDa chaperonin (319 aa).

The segment covering 1 to 10 has biased composition (basic and acidic residues); that stretch reads MTDASGSERL. Residues 1-25 form a disordered region; the sequence is MTDASGSERLKRAKGISEGTPSSLP. Intrachain disulfides connect cysteine 261-cysteine 263 and cysteine 294-cysteine 297.

Belongs to the HSP33 family. In terms of processing, under oxidizing conditions two disulfide bonds are formed involving the reactive cysteines. Under reducing conditions zinc is bound to the reactive cysteines and the protein is inactive.

The protein resides in the cytoplasm. Redox regulated molecular chaperone. Protects both thermally unfolding and oxidatively damaged proteins from irreversible aggregation. Plays an important role in the bacterial defense system toward oxidative stress. The protein is 33 kDa chaperonin of Synechococcus sp. (strain JA-2-3B'a(2-13)) (Cyanobacteria bacterium Yellowstone B-Prime).